Here is a 171-residue protein sequence, read N- to C-terminus: Adenine phosphoribosyltransferase (171 aa).

This sequence belongs to the purine/pyrimidine phosphoribosyltransferase family. As to quaternary structure, homodimer.

It localises to the cytoplasm. It carries out the reaction AMP + diphosphate = 5-phospho-alpha-D-ribose 1-diphosphate + adenine. Its pathway is purine metabolism; AMP biosynthesis via salvage pathway; AMP from adenine: step 1/1. Its function is as follows. Catalyzes a salvage reaction resulting in the formation of AMP, that is energically less costly than de novo synthesis. This Mesomycoplasma hyopneumoniae (strain 232) (Mycoplasma hyopneumoniae) protein is Adenine phosphoribosyltransferase.